The primary structure comprises 648 residues: Fidgetin-like protein 2 (648 aa).

Positions 1 to 36 are disordered; that stretch reads MHWTPEHAQPLNQWPEQHLDVSSTTPSPAHKLELPP. Residues 10 to 27 show a composition bias toward polar residues; sequence PLNQWPEQHLDVSSTTPS. ATP contacts are provided by residues A394 and 434–439; that span reads GCGKAL.

Belongs to the AAA ATPase family. It depends on Mg(2+) as a cofactor.

It is found in the cytoplasm. The protein resides in the cell cortex. The enzyme catalyses ATP + H2O = ADP + phosphate + H(+). In terms of biological role, microtubule-severing enzyme that negatively regulates cell migration and wound healing. In migrating cells, targets dynamic microtubules (MTs) at the leading edge and severs them, thereby suppressing motility. Microtubule severing releases ARHGEF2 which activates RHOA, which in turn regulates focal ahesion turnover via focal adhesion kinase, as opposed to F-actin polymerization, to suppress cell motility. Negative regulator of axon regeneration that suppresses axonal growth by selectively severing dynamic MTs in the distal axon shaft and growth cone. Contributes to proper cell branching during endothelial and neuronal development. This chain is Fidgetin-like protein 2 (Fignl2), found in Rattus norvegicus (Rat).